We begin with the raw amino-acid sequence, 80 residues long: Putative membrane protein insertion efficiency factor (80 aa).

Belongs to the UPF0161 family.

Its subcellular location is the cell membrane. Could be involved in insertion of integral membrane proteins into the membrane. This chain is Putative membrane protein insertion efficiency factor, found in Shouchella clausii (strain KSM-K16) (Alkalihalobacillus clausii).